Reading from the N-terminus, the 250-residue chain is 5-oxoprolinase subunit A (250 aa).

This sequence belongs to the LamB/PxpA family. As to quaternary structure, forms a complex composed of PxpA, PxpB and PxpC.

The enzyme catalyses 5-oxo-L-proline + ATP + 2 H2O = L-glutamate + ADP + phosphate + H(+). Functionally, catalyzes the cleavage of 5-oxoproline to form L-glutamate coupled to the hydrolysis of ATP to ADP and inorganic phosphate. This chain is 5-oxoprolinase subunit A, found in Staphylococcus aureus (strain bovine RF122 / ET3-1).